Here is an 88-residue protein sequence, read N- to C-terminus: Small ribosomal subunit protein bS16 (88 aa).

Belongs to the bacterial ribosomal protein bS16 family.

In Leptospira borgpetersenii serovar Hardjo-bovis (strain L550), this protein is Small ribosomal subunit protein bS16.